The sequence spans 209 residues: Ubiquitin-conjugating enzyme E2 S (209 aa).

The region spanning 14-160 (QTIRQVMREL…ARMMTEIHAQ (147 aa)) is the UBC core domain. Catalysis depends on Cys-98, which acts as the Glycyl thioester intermediate. Residues 162 to 209 (AKCGAGAHGDDKDDDGPSTKKHAGLDKKLQDKKKEKLLKEKKRMLKRL) form a disordered region. Over residues 169–199 (HGDDKDDDGPSTKKHAGLDKKLQDKKKEKLL) the composition is skewed to basic and acidic residues. Residues 200-209 (KEKKRMLKRL) are compositionally biased toward basic residues.

The protein belongs to the ubiquitin-conjugating enzyme family.

The enzyme catalyses S-ubiquitinyl-[E1 ubiquitin-activating enzyme]-L-cysteine + [E2 ubiquitin-conjugating enzyme]-L-cysteine = [E1 ubiquitin-activating enzyme]-L-cysteine + S-ubiquitinyl-[E2 ubiquitin-conjugating enzyme]-L-cysteine.. The protein operates within protein modification; protein ubiquitination. Functionally, catalyzes the covalent attachment of ubiquitin to other proteins. Acts as an essential factor of the anaphase promoting complex/cyclosome (APC/C), a cell cycle-regulated ubiquitin ligase that controls progression through mitosis. Acts by specifically elongating polyubiquitin chains initiated by the E2 enzyme vih/UbcH10 on APC/C substrates, enhancing the degradation of APC/C substrates by the proteasome and promoting mitotic exit. The protein is Ubiquitin-conjugating enzyme E2 S of Drosophila erecta (Fruit fly).